The primary structure comprises 95 residues: Aspartyl/glutamyl-tRNA(Asn/Gln) amidotransferase subunit C (95 aa).

The protein belongs to the GatC family. In terms of assembly, heterotrimer of A, B and C subunits.

It catalyses the reaction L-glutamyl-tRNA(Gln) + L-glutamine + ATP + H2O = L-glutaminyl-tRNA(Gln) + L-glutamate + ADP + phosphate + H(+). The enzyme catalyses L-aspartyl-tRNA(Asn) + L-glutamine + ATP + H2O = L-asparaginyl-tRNA(Asn) + L-glutamate + ADP + phosphate + 2 H(+). Its function is as follows. Allows the formation of correctly charged Asn-tRNA(Asn) or Gln-tRNA(Gln) through the transamidation of misacylated Asp-tRNA(Asn) or Glu-tRNA(Gln) in organisms which lack either or both of asparaginyl-tRNA or glutaminyl-tRNA synthetases. The reaction takes place in the presence of glutamine and ATP through an activated phospho-Asp-tRNA(Asn) or phospho-Glu-tRNA(Gln). The sequence is that of Aspartyl/glutamyl-tRNA(Asn/Gln) amidotransferase subunit C from Campylobacter fetus subsp. fetus (strain 82-40).